A 248-amino-acid polypeptide reads, in one-letter code: Phosphoglycerate mutase (248 aa).

Substrate is bound by residues 8–15 (RHGQSEWN), 21–22 (TG), Arg60, 87–90 (ERHY), Lys98, 114–115 (RR), and 183–184 (GN). The active-site Tele-phosphohistidine intermediate is His9. Glu87 functions as the Proton donor/acceptor in the catalytic mechanism.

Belongs to the phosphoglycerate mutase family. BPG-dependent PGAM subfamily.

The protein resides in the cytoplasm. It carries out the reaction (2R)-2-phosphoglycerate = (2R)-3-phosphoglycerate. It functions in the pathway carbohydrate degradation; glycolysis; pyruvate from D-glyceraldehyde 3-phosphate: step 3/5. The chain is Phosphoglycerate mutase (GPM1) from Candida albicans (strain SC5314 / ATCC MYA-2876) (Yeast).